The sequence spans 460 residues: Hydroxymethylglutaryl-CoA synthase erg13B (460 aa).

Glutamate 86 serves as the catalytic Proton donor/acceptor. Cysteine 120 functions as the Acyl-thioester intermediate in the catalytic mechanism. Residues cysteine 120, threonine 162, serine 212, histidine 263, lysine 272, asparagine 340, and serine 374 each coordinate (3S)-3-hydroxy-3-methylglutaryl-CoA. The active-site Proton donor/acceptor is histidine 263.

It belongs to the thiolase-like superfamily. HMG-CoA synthase family.

It carries out the reaction acetoacetyl-CoA + acetyl-CoA + H2O = (3S)-3-hydroxy-3-methylglutaryl-CoA + CoA + H(+). It functions in the pathway metabolic intermediate biosynthesis; (R)-mevalonate biosynthesis; (R)-mevalonate from acetyl-CoA: step 2/3. Hydroxymethylglutaryl-CoA synthase; part of the first module of ergosterol biosynthesis pathway that includes the early steps of the pathway, conserved across all eukaryotes, and which results in the formation of mevalonate from acetyl-coenzyme A (acetyl-CoA). Erg13A and erg13B condense acetyl-CoA with acetoacetyl-CoA to form hydroxymethylglutaryl-CoA (HMG-CoA). The first module starts with the action of the cytosolic acetyl-CoA acetyltransferase erg10B that catalyzes the formation of acetoacetyl-CoA. The hydroxymethylglutaryl-CoA synthases erg13A and erg13B then condense acetyl-CoA with acetoacetyl-CoA to form HMG-CoA. The rate-limiting step of the early module is the reduction to mevalonate by the 3-hydroxy-3-methylglutaryl-coenzyme A (HMG-CoA) reductases hmg1 and hmg2. Mevalonate is also a precursor for the extracellular siderophore triacetylfusarinine C (TAFC). The sequence is that of Hydroxymethylglutaryl-CoA synthase erg13B from Aspergillus fumigatus (strain ATCC MYA-4609 / CBS 101355 / FGSC A1100 / Af293) (Neosartorya fumigata).